The primary structure comprises 887 residues: Pyruvate, phosphate dikinase 2 (887 aa).

Residue Thr467 is modified to Phosphothreonine; by PDRP1. Residue His469 is the Tele-phosphohistidine intermediate of the active site. Substrate is bound by residues Arg575, Arg632, Glu761, Gly782, Thr783, Asn784, and Asp785. Glu761 serves as a coordination point for Mg(2+). A Mg(2+)-binding site is contributed by Asp785. Cys847 (proton donor) is an active-site residue.

This sequence belongs to the PEP-utilizing enzyme family. Mg(2+) serves as cofactor.

It localises to the cytoplasm. The enzyme catalyses pyruvate + phosphate + ATP = phosphoenolpyruvate + AMP + diphosphate + H(+). Formation of phosphoenolpyruvate. The protein is Pyruvate, phosphate dikinase 2 (PPDK2) of Oryza sativa subsp. japonica (Rice).